Reading from the N-terminus, the 1011-residue chain is Histone deacetylase 9 (1011 aa).

At Ser-22 the chain carries Phosphoserine. The interaction with CTBP1 stretch occupies residues Pro-23 to Arg-27. 3 disordered regions span residues Arg-110 to Ala-139, Thr-183 to Asn-249, and Thr-262 to Val-304. The segment at Arg-136 to Lys-154 is interaction with MEF2. The tract at residues Leu-175–Ala-343 is interaction with MAPK10. Residues Leu-185–Tyr-199 show a composition bias toward polar residues. Over residues Asp-208–Ala-219 the composition is skewed to basic and acidic residues. The tract at residues Thr-218–Val-261 is interaction with ETV6. Phosphoserine occurs at positions 220 and 240. Over residues Lys-233 to Gly-248 the composition is skewed to basic and acidic residues. A compositionally biased stretch (low complexity) spans Thr-262 to Ser-285. The residue at position 451 (Ser-451) is a Phosphoserine. The segment at Gln-494–Asp-536 is disordered. A compositionally biased stretch (polar residues) spans Ser-522–Ser-532. Ser-554 carries the post-translational modification Phosphoserine. A histone deacetylase region spans residues Ser-631–Glu-978. Zn(2+)-binding residues include Cys-646, Cys-648, His-654, and Cys-731. His-783 is an active-site residue.

It belongs to the histone deacetylase family. HD type 2 subfamily. In terms of assembly, homodimer. Interacts with CTBP1. The phosphorylated form interacts with 14-3-3. Interacts with HDAC1 and HDAC3, and probably with HDAC4 and HDAC5. Interacts with MEF2, MAPK10, ETV6, NCOR1 and BCL6. Interacts with FOXP3 in the absence of T-cell stimulation. Phosphorylated on Ser-220 and Ser-450; which promotes 14-3-3-binding, impairs interaction with MEF2, and antagonizes antimyogenic activity. Phosphorylated on Ser-240; which impairs nuclear accumulation. Isoform 7 is phosphorylated on Tyr-1010. Phosphorylated by the PKC kinases PKN1 and PKN2, impairing nuclear import. In terms of processing, sumoylated. Broadly expressed, with highest levels in brain, heart, muscle and testis. Isoform 3 is present in human bladder carcinoma cells (at protein level).

Its subcellular location is the nucleus. The catalysed reaction is N(6)-acetyl-L-lysyl-[histone] + H2O = L-lysyl-[histone] + acetate. Inhibited by Trichostatin A (TSA) and suberoylanilide hydroxamic acid. In terms of biological role, responsible for the deacetylation of lysine residues on the N-terminal part of the core histones (H2A, H2B, H3 and H4). Histone deacetylation gives a tag for epigenetic repression and plays an important role in transcriptional regulation, cell cycle progression and developmental events. Represses MEF2-dependent transcription. Functionally, isoform 3 lacks active site residues and therefore is catalytically inactive. Represses MEF2-dependent transcription by recruiting HDAC1 and/or HDAC3. Seems to inhibit skeletal myogenesis and to be involved in heart development. Protects neurons from apoptosis, both by inhibiting JUN phosphorylation by MAPK10 and by repressing JUN transcription via HDAC1 recruitment to JUN promoter. In Homo sapiens (Human), this protein is Histone deacetylase 9 (HDAC9).